The sequence spans 62 residues: Conotoxin Pn-B0151 (62 aa).

An N-terminal signal peptide occupies residues 1-22 (MRCLPVFVILLLLIASTPSVDA). A propeptide spanning residues 23 to 48 (LQKTKDDMPLASFHDNVKRILQTLSN) is cleaved from the precursor.

Belongs to the conotoxin T superfamily. In terms of processing, contains 2 disulfide bonds that can be either 'C1-C3, C2-C4' or 'C1-C4, C2-C3', since these disulfide connectivities have been observed for conotoxins with cysteine framework V (for examples, see AC P0DQQ7 and AC P81755). Expressed by the venom duct.

It is found in the secreted. This Conus pennaceus (Feathered cone) protein is Conotoxin Pn-B0151.